Reading from the N-terminus, the 393-residue chain is NAD(P)H-quinone oxidoreductase subunit H, chloroplastic (393 aa).

The protein belongs to the complex I 49 kDa subunit family. As to quaternary structure, NDH is composed of at least 16 different subunits, 5 of which are encoded in the nucleus.

Its subcellular location is the plastid. It is found in the chloroplast thylakoid membrane. The catalysed reaction is a plastoquinone + NADH + (n+1) H(+)(in) = a plastoquinol + NAD(+) + n H(+)(out). It carries out the reaction a plastoquinone + NADPH + (n+1) H(+)(in) = a plastoquinol + NADP(+) + n H(+)(out). Its function is as follows. NDH shuttles electrons from NAD(P)H:plastoquinone, via FMN and iron-sulfur (Fe-S) centers, to quinones in the photosynthetic chain and possibly in a chloroplast respiratory chain. The immediate electron acceptor for the enzyme in this species is believed to be plastoquinone. Couples the redox reaction to proton translocation, and thus conserves the redox energy in a proton gradient. This Angiopteris evecta (Mule's foot fern) protein is NAD(P)H-quinone oxidoreductase subunit H, chloroplastic.